The chain runs to 629 residues: tRNA uridine 5-carboxymethylaminomethyl modification enzyme MnmG (629 aa).

Residues G13–G18, V125, and S180 contribute to the FAD site. G273 to F287 contacts NAD(+). Q370 lines the FAD pocket.

Belongs to the MnmG family. As to quaternary structure, homodimer. Heterotetramer of two MnmE and two MnmG subunits. FAD is required as a cofactor.

The protein localises to the cytoplasm. NAD-binding protein involved in the addition of a carboxymethylaminomethyl (cmnm) group at the wobble position (U34) of certain tRNAs, forming tRNA-cmnm(5)s(2)U34. In Escherichia coli O139:H28 (strain E24377A / ETEC), this protein is tRNA uridine 5-carboxymethylaminomethyl modification enzyme MnmG.